A 106-amino-acid polypeptide reads, in one-letter code: Replication restart protein PriB (106 aa).

The region spanning 4–103 is the SSB domain; that stretch reads MNRLVLSGTV…LHAEQIELID (100 aa).

Belongs to the PriB family. Homodimer. Interacts with PriA and DnaT. Component of the replication restart primosome. Primosome assembly occurs via a 'hand-off' mechanism. PriA binds to replication forks, subsequently PriB then DnaT bind; DnaT then displaces ssDNA to generate the helicase loading substrate.

Involved in the restart of stalled replication forks, which reloads the replicative helicase on sites other than the origin of replication; the PriA-PriB pathway is the major replication restart pathway. During primosome assembly it facilitates complex formation between PriA and DnaT on DNA; stabilizes PriA on DNA. Stimulates the DNA unwinding activity of PriA helicase. This chain is Replication restart protein PriB, found in Pectobacterium atrosepticum (strain SCRI 1043 / ATCC BAA-672) (Erwinia carotovora subsp. atroseptica).